Reading from the N-terminus, the 391-residue chain is Chaperone protein DnaJ (391 aa).

The region spanning 2 to 67 (DYYDVLGVSK…QKRESYDRYG (66 aa)) is the J domain. The CR-type zinc-finger motif lies at 148–226 (GVKKELLVSG…CRGQGRIKDK (79 aa)). Positions 161, 164, 178, 181, 200, 203, 214, and 217 each coordinate Zn(2+). 4 CXXCXGXG motif repeats span residues 161-168 (CETCSGSG), 178-185 (CDRCKGSG), 200-207 (CPECGGEG), and 214-221 (CSSCRGQG).

Belongs to the DnaJ family. As to quaternary structure, homodimer. Zn(2+) is required as a cofactor.

It localises to the cytoplasm. Its function is as follows. Participates actively in the response to hyperosmotic and heat shock by preventing the aggregation of stress-denatured proteins and by disaggregating proteins, also in an autonomous, DnaK-independent fashion. Unfolded proteins bind initially to DnaJ; upon interaction with the DnaJ-bound protein, DnaK hydrolyzes its bound ATP, resulting in the formation of a stable complex. GrpE releases ADP from DnaK; ATP binding to DnaK triggers the release of the substrate protein, thus completing the reaction cycle. Several rounds of ATP-dependent interactions between DnaJ, DnaK and GrpE are required for fully efficient folding. Also involved, together with DnaK and GrpE, in the DNA replication of plasmids through activation of initiation proteins. This chain is Chaperone protein DnaJ, found in Chlamydia abortus (strain DSM 27085 / S26/3) (Chlamydophila abortus).